We begin with the raw amino-acid sequence, 310 residues long: UPF0324 membrane protein GSU2818 (310 aa).

The next 9 helical transmembrane spans lie at 11-33 (FTIL…VMGI), 53-72 (MLLQ…GEVI), 79-97 (IWYS…YGLG), 107-129 (SALI…APVL), 136-158 (TAVA…PLVG), 193-215 (ALAI…VMAA), 227-244 (IPLF…RTLL), 254-273 (LAGV…GAGL), and 286-308 (LVQA…KLPW).

The protein belongs to the UPF0324 family.

The protein localises to the cell membrane. The polypeptide is UPF0324 membrane protein GSU2818 (Geobacter sulfurreducens (strain ATCC 51573 / DSM 12127 / PCA)).